Reading from the N-terminus, the 716-residue chain is Exocyst complex component 8 (716 aa).

Phosphoserine is present on S15. Positions 110 to 119 (STGEDTAGAG) are enriched in low complexity. Positions 110–149 (STGEDTAGAGPRERGAAQAGFLPGPAGVPREGPGTGEEGK) are disordered. A PH domain is found at 173–273 (YLVYNGDLVE…WLEVLEETKR (101 aa)). Positions 275 to 284 (LSDKRRREQE) are enriched in basic and acidic residues. The tract at residues 275-319 (LSDKRRREQEEAAALRAPPPVTSKGSNPFEDEAEEELATPEAEEE) is disordered. Over residues 303–319 (FEDEAEEELATPEAEEE) the composition is skewed to acidic residues. A Phosphothreonine modification is found at T313.

This sequence belongs to the EXO84 family. In terms of assembly, the exocyst complex is composed of EXOC1, EXOC2, EXOC3, EXOC4, EXOC5, EXOC6, EXOC7 and EXOC8. Interacts (via PH domain) with GTP-bound RALA and RALB. Interacts with SH3BP1; required for the localization of both SH3BP1 and the exocyst to the leading edge of migrating cells.

The protein resides in the cytoplasm. It localises to the perinuclear region. It is found in the cell projection. Its subcellular location is the growth cone. Component of the exocyst complex involved in the docking of exocytic vesicles with fusion sites on the plasma membrane. In Rattus norvegicus (Rat), this protein is Exocyst complex component 8 (Exoc8).